Reading from the N-terminus, the 627-residue chain is Spindle assembly abnormal protein 6 homolog (627 aa).

The region spanning 39-91 is the PISA domain; that stretch reads VHRKDLVVRLTDDTDLYFLYNLIISEEDFQSLKVQQGLLIDFTSFPQKFIDLL. Residues 153–473 adopt a coiled-coil conformation; the sequence is LASCLSSVKE…SREVLKTNEN (321 aa). 2 disordered regions span residues 187–257 and 561–586; these read QTLS…LQTK and EVSPAAFSQPANKENSEPVGLDSKYF. Residues 191 to 201 are compositionally biased toward basic and acidic residues; sequence EKSRELDKLRS. Polar residues predominate over residues 202 to 213; sequence EWTSQTTSLSSR. The segment covering 214-226 has biased composition (basic and acidic residues); it reads HMQDLTAEREKAL. Positions 229 to 238 are enriched in low complexity; it reads QSRLQQQNEQ.

In terms of assembly, nine homodimers form a cartwheel structure with an internal diameter of 23 nM and radial spokes connecting to the microtubule triplets.

Its subcellular location is the cytoplasm. It is found in the cytoskeleton. The protein resides in the microtubule organizing center. The protein localises to the centrosome. Functionally, central scaffolding component of the centrioles ensuring their 9-fold symmetry. Required for centrosome biogenesis and duplication: required both for mother-centriole-dependent centriole duplication and deuterosome-dependent centriole amplification in multiciliated cells. This Danio rerio (Zebrafish) protein is Spindle assembly abnormal protein 6 homolog (sass6).